An 88-amino-acid chain; its full sequence is Translation initiation factor IF-1 1 (88 aa).

The S1-like domain occupies 1–72; the sequence is MSKEDMIELE…TKGRINFRHP (72 aa). A disordered region spans residues 66 to 88; it reads RINFRHPTANPGAGPRPSHHHRR.

The protein belongs to the IF-1 family. As to quaternary structure, component of the 30S ribosomal translation pre-initiation complex which assembles on the 30S ribosome in the order IF-2 and IF-3, IF-1 and N-formylmethionyl-tRNA(fMet); mRNA recruitment can occur at any time during PIC assembly.

The protein resides in the cytoplasm. Functionally, one of the essential components for the initiation of protein synthesis. Stabilizes the binding of IF-2 and IF-3 on the 30S subunit to which N-formylmethionyl-tRNA(fMet) subsequently binds. Helps modulate mRNA selection, yielding the 30S pre-initiation complex (PIC). Upon addition of the 50S ribosomal subunit IF-1, IF-2 and IF-3 are released leaving the mature 70S translation initiation complex. This is Translation initiation factor IF-1 1 from Chromobacterium violaceum (strain ATCC 12472 / DSM 30191 / JCM 1249 / CCUG 213 / NBRC 12614 / NCIMB 9131 / NCTC 9757 / MK).